The sequence spans 218 residues: DNA-directed RNA polymerase III subunit RPC7-like (218 aa).

The disordered stretch occupies residues 133-218; it reads LPKRPPKTTE…SDDNMDEAIY (86 aa). The span at 139 to 160 shows a compositional bias: basic and acidic residues; the sequence is KTTEDKEETIQKLETLEKKEEE. Acidic residues-rich tracts occupy residues 161 to 193 and 201 to 218; these read VTSEEDEEKEEEEEKEEEEEEEYDEEEHEEETD and NGEDFGGDSDDNMDEAIY.

Belongs to the eukaryotic RPC7 RNA polymerase subunit family. Component of the RNA polymerase III (Pol III) complex consisting of 17 subunits. Pol III exists as two alternative complexes defined by the mutually exclusive incorporation of subunit POLR3G/RPC7alpha or POLR3GL/RPC7beta. Found in a trimeric complex with POLR3C/RPC3 and POLR3F/RPC6. Directly interacts with POLR3C. Widely expressed. Expressed in CD4-positive T cells.

It is found in the nucleus. Its function is as follows. DNA-dependent RNA polymerase catalyzes the transcription of DNA into RNA using the four ribonucleoside triphosphates as substrates. Specific peripheric component of RNA polymerase III which synthesizes small RNAs, such as 5S rRNA and tRNAs. The protein is DNA-directed RNA polymerase III subunit RPC7-like of Homo sapiens (Human).